We begin with the raw amino-acid sequence, 314 residues long: Trihelix transcription factor ASR3 (314 aa).

Residues 1-34 form a disordered region; sequence MALEQLGLGVSAVDGGENSSAPSNDGGDDGVKTA. Residues 38 to 104 form the Myb-like domain; the sequence is RWTRQEILVL…QCRKRWSNLA (67 aa). A Nuclear localization signal motif is present at residues 84–91; the sequence is CKRHGVNR. Residues 161 to 165 carry the EAR 1 motif; the sequence is LSLGL. Thr-189 carries the phosphothreonine; by MAPK4 modification. The interval 207–255 is disordered; it reads CVADQGRVKEKQPEAANVEGGSTSQEERKRKRTSFGEKEEEEEEGETKK. The EAR 2 motif lies at 280–284; that stretch reads LNLKL.

As to quaternary structure, homodimer. Interacts directly with MPK4. Phosphorylated on Thr-189 by MPK4 in response to microbe-associated molecular patterns (MAMPs, e.g. flg22, elf18, chitin, and LPS). This phosphorylation enhances DNA-binding and thus negatively regulates immune gene expression.

It is found in the nucleus. In terms of biological role, transcriptional repressor that binds DNA and plays a negative role in regulating microbe-associated molecular patterns-(MAMPs, e.g. flg22, elf18, chitin, and LPS) triggered immunity (PTI) by negatively regulating immune gene expression. The sequence is that of Trihelix transcription factor ASR3 from Arabidopsis thaliana (Mouse-ear cress).